We begin with the raw amino-acid sequence, 819 residues long: Plastid division protein CDP1, chloroplastic (819 aa).

The transit peptide at 1–76 (MPVAYTFPVL…NAAGGGIHVV (76 aa)) directs the protein to the chloroplast. Residues 77-572 (DNAPSRTSSL…NKIWDEWLSQ (496 aa)) lie on the Stromal side of the membrane. Residues 419–439 (EAEALEKLKQLESNSDSAVRN) are a coiled coil. A helical membrane pass occupies residues 573–593 (SSLIGRVSVVALLGCTVFFSL). Residues 594-819 (KLSGIRSGRL…FCQSDIQIQK (226 aa)) lie on the Chloroplast intermembrane side of the membrane. The stretch at 762 to 782 (IAGEAAEIEALLEEAAELVDE) forms a coiled coil.

As to quaternary structure, self-interacts. Interacts (via N-terminus) with ARC3 (via MORN domains). Binds (via N-terminus) to FTSZ2 proteins, FTSZ2-1 and FTSZ2-2. Recruited ARC3 to the middle of the plastid where subsequent complex made of CDP1/PARC6, ARC3 and FtsZ proteins can form; this complex enhances the dynamics of Z rings during chloroplast division. Interacts (via C-terminus) with PDV1 (via C-terminus). Interacts with MIND1. As to expression, exclusively expressed in young green tissues such as young cotyledons, shoot apex, emerging leaves and budding inflorescence.

It is found in the plastid. It localises to the chloroplast inner membrane. Its function is as follows. Component of the plastid division machinery required for PDV1 localization to constriction sites. Involved in chloroplast division site placement. Required for the proper formation of FtsZ rings at the division site in nongreen plastids (e.g. etioplasts). Inhibits FtsZ assembly, functioning as an antagonistic regulator of FtsZ dynamics against ARC6, by recruiting ARC3 to the middle of the plastid to facilitate its interaction with FtsZ proteins. Required during stromule biogenesis in the leaf epidermis, especially in non-mesophyll cells plastids. The polypeptide is Plastid division protein CDP1, chloroplastic (Arabidopsis thaliana (Mouse-ear cress)).